Consider the following 762-residue polypeptide: Polyadenylate-binding protein, cytoplasmic and nuclear (762 aa).

The tract at residues 39–58 (TGEEIDTAGPTPSSAAPHPQ) is disordered. Positions 48–58 (PTPSSAAPHPQ) are enriched in low complexity. 4 consecutive RRM domains span residues 61–139 (ASLY…WSQR), 149–226 (GNVF…HHIP), 242–320 (TNIY…RAQK), and 346–470 (VNLY…LAQR). 3 disordered regions span residues 376-429 (KVMR…KSKL), 596-663 (SALA…AGAP), and 740-762 (VRQQGDGEGAQAPSKEEKTEEKA). Residues 389 to 425 (GESKEGEESEKNKENKPEEKEGDDSKPEEKEGEDSKS) are compositionally biased toward basic and acidic residues. The segment covering 600–612 (GGRGGPAGRGPMQ) has biased composition (gly residues). The span at 645 to 663 (AAGRAPAGAPAGARGAGAP) shows a compositional bias: low complexity. Residues 664-741 (EGLQGQLAAV…ALAVYDDYVR (78 aa)) form the PABC domain. Basic and acidic residues predominate over residues 753–762 (SKEEKTEEKA).

Belongs to the polyadenylate-binding protein type-1 family.

It is found in the cytoplasm. It localises to the nucleus. In terms of biological role, binds the poly(A) tail of mRNA. Appears to be an important mediator of the multiple roles of the poly(A) tail in mRNA biogenesis, stability and translation. In the nucleus, involved in both mRNA cleavage and polyadenylation. Is also required for efficient mRNA export to the cytoplasm. Acts in concert with a poly(A)-specific nuclease (PAN) to affect poly(A) tail shortening, which may occur concomitantly with either nucleocytoplasmic mRNA transport or translational initiation. In the cytoplasm, stimulates translation initiation and regulates mRNA decay through translation termination-coupled poly(A) shortening, probably mediated by PAN. This is Polyadenylate-binding protein, cytoplasmic and nuclear (PAB1) from Pyricularia oryzae (strain 70-15 / ATCC MYA-4617 / FGSC 8958) (Rice blast fungus).